Reading from the N-terminus, the 632-residue chain is DNA gyrase subunit B (632 aa).

Residues 419–533 (RELFIVEGES…SGYLYIAQPP (115 aa)) enclose the Toprim domain. Mg(2+) contacts are provided by Glu425, Asp498, and Asp500.

Belongs to the type II topoisomerase GyrB family. As to quaternary structure, heterotetramer, composed of two GyrA and two GyrB chains. In the heterotetramer, GyrA contains the active site tyrosine that forms a transient covalent intermediate with DNA, while GyrB binds cofactors and catalyzes ATP hydrolysis. It depends on Mg(2+) as a cofactor. Requires Mn(2+) as cofactor. The cofactor is Ca(2+).

It localises to the cytoplasm. It carries out the reaction ATP-dependent breakage, passage and rejoining of double-stranded DNA.. Its function is as follows. A type II topoisomerase that negatively supercoils closed circular double-stranded (ds) DNA in an ATP-dependent manner to modulate DNA topology and maintain chromosomes in an underwound state. Negative supercoiling favors strand separation, and DNA replication, transcription, recombination and repair, all of which involve strand separation. Also able to catalyze the interconversion of other topological isomers of dsDNA rings, including catenanes and knotted rings. Type II topoisomerases break and join 2 DNA strands simultaneously in an ATP-dependent manner. The polypeptide is DNA gyrase subunit B (Archaeoglobus fulgidus (strain ATCC 49558 / DSM 4304 / JCM 9628 / NBRC 100126 / VC-16)).